A 164-amino-acid chain; its full sequence is Peptide deformylase (164 aa).

Positions 87 and 129 each coordinate Fe cation. Residue glutamate 130 is part of the active site. Histidine 133 contacts Fe cation.

It belongs to the polypeptide deformylase family. Fe(2+) is required as a cofactor.

It catalyses the reaction N-terminal N-formyl-L-methionyl-[peptide] + H2O = N-terminal L-methionyl-[peptide] + formate. In terms of biological role, removes the formyl group from the N-terminal Met of newly synthesized proteins. Requires at least a dipeptide for an efficient rate of reaction. N-terminal L-methionine is a prerequisite for activity but the enzyme has broad specificity at other positions. This Thermotoga sp. (strain RQ2) protein is Peptide deformylase.